The primary structure comprises 315 residues: C1GALT1-specific chaperone 1-like protein (315 aa).

The Cytoplasmic portion of the chain corresponds to 1–8; the sequence is MVSASGTS. The chain crosses the membrane as a helical; Signal-anchor for type II membrane protein span at residues 9-29; it reads FFKGMLLGSISWVLITMFGQI. Topologically, residues 30–315 are lumenal; sequence HIRHRGQTQD…FLPPVGSEND (286 aa). 2 N-linked (GlcNAc...) asparagine glycosylation sites follow: Asn55 and Asn301.

It belongs to the glycosyltransferase 31 family. Beta3-Gal-T subfamily.

The protein resides in the membrane. This chain is C1GALT1-specific chaperone 1-like protein, found in Homo sapiens (Human).